A 499-amino-acid polypeptide reads, in one-letter code: Cytochrome P450 2M1 (499 aa).

Cysteine 441 contributes to the heme binding site.

Belongs to the cytochrome P450 family. Heme is required as a cofactor. As to expression, in kidney and in liver from juvenile and sexually mature trout from both sexes.

It localises to the endoplasmic reticulum membrane. The protein resides in the microsome membrane. It carries out the reaction an organic molecule + reduced [NADPH--hemoprotein reductase] + O2 = an alcohol + oxidized [NADPH--hemoprotein reductase] + H2O + H(+). Its function is as follows. Has (omega-6)-hydroxylation activity toward lauric acid. In Oncorhynchus mykiss (Rainbow trout), this protein is Cytochrome P450 2M1 (cyp2m1).